The following is a 105-amino-acid chain: Dynein axonemal light chain 4 (105 aa).

This sequence belongs to the dynein light chain family. As to quaternary structure, consists of at least two heavy chains and a number of intermediate and light chains.

The protein resides in the cytoplasm. The protein localises to the cytoskeleton. It localises to the cilium axoneme. Force generating protein of respiratory cilia. Produces force towards the minus ends of microtubules. Dynein has ATPase activity. This Mus musculus (Mouse) protein is Dynein axonemal light chain 4 (Dnal4).